We begin with the raw amino-acid sequence, 261 residues long: Ribosomal RNA small subunit methyltransferase J (261 aa).

S-adenosyl-L-methionine-binding positions include 111-112, 127-128, 163-164, and Asp181; these read RD, ER, and SS.

It belongs to the methyltransferase superfamily. RsmJ family.

The protein resides in the cytoplasm. It carries out the reaction guanosine(1516) in 16S rRNA + S-adenosyl-L-methionine = N(2)-methylguanosine(1516) in 16S rRNA + S-adenosyl-L-homocysteine + H(+). Its function is as follows. Specifically methylates the guanosine in position 1516 of 16S rRNA. The sequence is that of Ribosomal RNA small subunit methyltransferase J from Shewanella sp. (strain MR-7).